Here is a 96-residue protein sequence, read N- to C-terminus: Large ribosomal subunit protein eL43 (96 aa).

A C4-type zinc finger spans residues 41 to 62 (CPVCAFPKLKRVGTSIWVCDKC).

The protein belongs to the eukaryotic ribosomal protein eL43 family. It depends on Zn(2+) as a cofactor.

This is Large ribosomal subunit protein eL43 from Methanococcus maripaludis (strain C6 / ATCC BAA-1332).